Consider the following 95-residue polypeptide: Defensin alpha 4 (95 aa).

The N-terminal stretch at 1-19 is a signal peptide; the sequence is MRTLALLAAILLVALQAQA. Positions 20–62 are excised as a propeptide; sequence EHISVSIDEVVDQQPPQAEDQDVAIYVKEHESSALEALGVKAG. 3 cysteine pairs are disulfide-bonded: C65/C93, C67/C82, and C72/C92.

Belongs to the alpha-defensin family.

It localises to the secreted. Functionally, host-defense peptide that has antimicrobial activity. Inhibits corticotropin (ACTH)-stimulated corticosterone production (in vitro). In Oryctolagus cuniculus (Rabbit), this protein is Defensin alpha 4.